The chain runs to 275 residues: Large ribosomal subunit protein uL2 (275 aa).

The tract at residues 221-275 (RGTAMNPIDHPHGGGEGKNFGKHPVSPWGVQSKGKKTRKNKRTEKYILYNRKYKK) is disordered. Basic residues predominate over residues 253-262 (KGKKTRKNKR).

This sequence belongs to the universal ribosomal protein uL2 family. As to quaternary structure, part of the 50S ribosomal subunit. Forms a bridge to the 30S subunit in the 70S ribosome.

In terms of biological role, one of the primary rRNA binding proteins. Required for association of the 30S and 50S subunits to form the 70S ribosome, for tRNA binding and peptide bond formation. It has been suggested to have peptidyltransferase activity; this is somewhat controversial. Makes several contacts with the 16S rRNA in the 70S ribosome. The chain is Large ribosomal subunit protein uL2 from Wigglesworthia glossinidia brevipalpis.